A 177-amino-acid chain; its full sequence is Adenine phosphoribosyltransferase (177 aa).

The protein belongs to the purine/pyrimidine phosphoribosyltransferase family. Homodimer.

The protein resides in the cytoplasm. The enzyme catalyses AMP + diphosphate = 5-phospho-alpha-D-ribose 1-diphosphate + adenine. It participates in purine metabolism; AMP biosynthesis via salvage pathway; AMP from adenine: step 1/1. In terms of biological role, catalyzes a salvage reaction resulting in the formation of AMP, that is energically less costly than de novo synthesis. The chain is Adenine phosphoribosyltransferase from Chlorobium phaeobacteroides (strain DSM 266 / SMG 266 / 2430).